A 350-amino-acid polypeptide reads, in one-letter code: tRNA uridine(34) hydroxylase (350 aa).

In terms of domain architecture, Rhodanese spans Asp-146–Leu-240. Residue Cys-200 is the Cysteine persulfide intermediate of the active site. Over residues Arg-319–Gly-328 the composition is skewed to basic and acidic residues. The interval Arg-319 to Glu-350 is disordered.

It belongs to the TrhO family.

The enzyme catalyses uridine(34) in tRNA + AH2 + O2 = 5-hydroxyuridine(34) in tRNA + A + H2O. Its function is as follows. Catalyzes oxygen-dependent 5-hydroxyuridine (ho5U) modification at position 34 in tRNAs. The chain is tRNA uridine(34) hydroxylase from Salmonella schwarzengrund (strain CVM19633).